A 72-amino-acid chain; its full sequence is Large ribosomal subunit protein bL31 (72 aa).

Zn(2+)-binding residues include cysteine 16, cysteine 18, cysteine 38, and cysteine 41.

It belongs to the bacterial ribosomal protein bL31 family. Type A subfamily. In terms of assembly, part of the 50S ribosomal subunit. Requires Zn(2+) as cofactor.

Its function is as follows. Binds the 23S rRNA. This Azoarcus sp. (strain BH72) protein is Large ribosomal subunit protein bL31.